We begin with the raw amino-acid sequence, 403 residues long: Peroxisomal membrane protein PEX13 (403 aa).

Residues 1–11 (MASQPPPPPKP) show a composition bias toward pro residues. A disordered region spans residues 1–69 (MASQPPPPPK…SQQTGSGNLN (69 aa)). The Peroxisomal matrix segment spans residues 1–134 (MASQPPPPPK…SSRGAFQSIE (134 aa)). The span at 59–69 (PSQQTGSGNLN) shows a compositional bias: polar residues. A helical transmembrane segment spans residues 135–155 (SIVHAFASVSMMMDATFSAVY). The tract at residues 145–233 (MMMDATFSAV…EDRAANSAKS (89 aa)) is targeting to peroxisomes. Residues 156–174 (NSFRAVLDVANHFSRLKIH) are Cytoplasmic-facing. The chain crosses the membrane as a helical span at residues 175 to 192 (FTKVFSAFALVRTIRYLY). Positions 175–196 (FTKVFSAFALVRTIRYLYRRLQ) are interaction with PEX19. Topologically, residues 193 to 233 (RRLQWMIGLRRGLENEDLWAESEGTVACLGAEDRAANSAKS) are peroxisomal matrix. Residues 234–254 (WPIFLFFAVILGGPYLIWKLL) form a helical membrane-spanning segment. The Cytoplasmic segment spans residues 255 to 403 (STHSDEVTDS…TGKNGDKQDL (149 aa)). The SH3 domain occupies 272–336 (DDHVVARAEY…PANYVKILGK (65 aa)). At Ser-354 the chain carries Phosphoserine.

Belongs to the peroxin-13 family. As to quaternary structure, interacts (via SH3 domain) with PEX14 (via SH3-binding motif); forming the PEX13-PEX14 docking complex. Interacts with PEX19.

It is found in the peroxisome membrane. Functionally, component of the PEX13-PEX14 docking complex, a translocon channel that specifically mediates the import of peroxisomal cargo proteins bound to PEX5 receptor. The PEX13-PEX14 docking complex forms a large import pore which can be opened to a diameter of about 9 nm. Mechanistically, PEX5 receptor along with cargo proteins associates with the PEX14 subunit of the PEX13-PEX14 docking complex in the cytosol, leading to the insertion of the receptor into the organelle membrane with the concomitant translocation of the cargo into the peroxisome matrix. Involved in the import of PTS1- and PTS2-type containing proteins. The protein is Peroxisomal membrane protein PEX13 (PEX13) of Bos taurus (Bovine).